The following is a 193-amino-acid chain: Recombination protein RecR (193 aa).

The C4-type zinc finger occupies 61–76 (CTSCNALSESEVCEIC). The 87-residue stretch at 84–170 (SQLCMVLHPR…TFTKIAQGVP (87 aa)) folds into the Toprim domain.

It belongs to the RecR family.

In terms of biological role, may play a role in DNA repair. It seems to be involved in an RecBC-independent recombinational process of DNA repair. It may act with RecF and RecO. This is Recombination protein RecR from Helicobacter pylori (strain HPAG1).